A 192-amino-acid chain; its full sequence is Small ribosomal subunit protein eS7 (192 aa).

The protein belongs to the eukaryotic ribosomal protein eS7 family.

The chain is Small ribosomal subunit protein eS7 (RpS7) from Culex quinquefasciatus (Southern house mosquito).